A 659-amino-acid polypeptide reads, in one-letter code: Enzymatic polyprotein (659 aa).

The segment at 1–180 is protease; that stretch reads MSLRNRTNPN…FLEEGGNHVD (180 aa). Residue aspartate 34 is part of the active site. The Reverse transcriptase domain maps to 252–436; the sequence is LELKVIKPSK…EKINFLGLEI (185 aa).

Belongs to the caulimoviridae enzymatic polyprotein family.

The enzyme catalyses DNA(n) + a 2'-deoxyribonucleoside 5'-triphosphate = DNA(n+1) + diphosphate. In terms of biological role, encodes for at least two polypeptides: protease (PR) and reverse transcriptase (RT). The protease processes the polyprotein in cis. Reverse transcriptase is multifunctional enzyme that converts the viral RNA genome into dsDNA in viral cytoplasmic capsids. This enzyme displays a DNA polymerase activity that can copy either DNA or RNA templates, and a ribonuclease H (RNase H) activity that cleaves the RNA strand of RNA-DNA heteroduplexes in a partially processive 3'- to 5'-endonucleasic mode. Neo-synthesized pregenomic RNA (pgRNA) are encapsidated, and reverse-transcribed inside the nucleocapsid. Partial (+)DNA is synthesized from the (-)DNA template and generates the relaxed circular DNA (RC-DNA) genome. After budding and infection, the RC-DNA migrates in the nucleus, and is converted into a plasmid-like covalently closed circular DNA (cccDNA). The protein is Enzymatic polyprotein of Dianthus caryophyllus (Carnation).